The chain runs to 1447 residues: ATP-dependent helicase SGS1 (1447 aa).

Disordered regions lie at residues 37–78, 243–264, 342–430, 552–572, and 601–639; these read IANK…TATK, KKDGMSKDQSKGRSQVSSQDDN, KEGA…EEKE, KENEDFEEDNNNNGIEYLSDS, and TERKLTGDNEHPPPSWSPKIKREKSSVSQKDEEDDFDDD. Over residues 59 to 78 the composition is skewed to polar residues; it reads GTTNFITSIPASGPTNTATK. Over residues 243-253 the composition is skewed to basic and acidic residues; sequence KKDGMSKDQSK. A compositionally biased stretch (polar residues) spans 254 to 264; that stretch reads GRSQVSSQDDN. The segment covering 363-386 has biased composition (basic and acidic residues); it reads ELTRRRNMRSREPVNYRIPDRDDP. Acidic residues-rich tracts occupy residues 403–415 and 552–561; these read EREEDELTMEAED and KENEDFEEDN. A compositionally biased stretch (basic and acidic residues) spans 601–611; the sequence is TERKLTGDNEH. Residues 687 to 864 enclose the Helicase ATP-binding domain; it reads VNATLQGKDV…IHNLELKEPV (178 aa). 714–721 lines the ATP pocket; the sequence is AVVKSGKT. Positions 808–811 match the DEAH box motif; the sequence is DEAH. Positions 886–1035 constitute a Helicase C-terminal domain; sequence TIFEICDAVK…NKEKHLNKLQ (150 aa). An HRDC domain is found at 1272–1351; sequence LNNLRMTYER…ADLSKKRSSE (80 aa). Over residues 1402 to 1411 the composition is skewed to polar residues; that stretch reads QIRQSQLPKN. A disordered region spans residues 1402–1447; it reads QIRQSQLPKNTTSSKSGTRSISKSSKKSANGRRGFRNYRGHYRGRK. Positions 1412–1424 are enriched in low complexity; it reads TTSSKSGTRSISK. Positions 1425 to 1447 are enriched in basic residues; the sequence is SSKKSANGRRGFRNYRGHYRGRK.

This sequence belongs to the helicase family. RecQ subfamily. In terms of assembly, heterodimer with TOP3. Forms a complex with TOP3 and RMI1. Forms a ternary complex with a MLH1-MLH3 heterodimer (MutLbeta) during meiosis. Interacts with TOP2. Mg(2+) serves as cofactor.

The protein localises to the nucleus. The protein resides in the nucleolus. The enzyme catalyses Couples ATP hydrolysis with the unwinding of duplex DNA by translocating in the 3'-5' direction.. It carries out the reaction ATP + H2O = ADP + phosphate + H(+). Its activity is regulated as follows. Helicase activity on G-quadruplex DNA is inhibited by ATP-gamma-S. ATP-dependent 3'-5' DNA helicase able to unwind duplex DNA or DNA:RNA heteroduplex. Unwinds G-quadruplex DNA; unwinding occurs in the 3'-5' direction, requires a 3' single-stranded end of at least 7 nucleotides. Helicase activity is higher on G-quadruplex substrates than on duplex DNA substrates. Assayed with a catalytic fragment (residues 400-1268). Telomeres and rDNA are notably G-rich; formation of G-quadruplex DNA would block DNA replication and transcription. Acts as an integral component of the S-phase checkpoint response, which arrests cells due to DNA damage or blocked fork progression during DNA replication. Can create a deleterious topological substrate that TOP3 preferentially resolves. The TOP3-SGS1 protein complex may function as a eukaryotic reverse gyrase introducing positive supercoils into extrachromosomal ribosomal DNA rings. Together with topoisomerase II has a role in chromosomal segregation. Maintains rDNA structure where it has a role in re-starting stalled replication forks. This is ATP-dependent helicase SGS1 from Saccharomyces cerevisiae (strain ATCC 204508 / S288c) (Baker's yeast).